The chain runs to 175 residues: ATP-dependent protease subunit HslV (175 aa).

T2 is a catalytic residue. Positions 158, 161, and 164 each coordinate Na(+).

The protein belongs to the peptidase T1B family. HslV subfamily. In terms of assembly, a double ring-shaped homohexamer of HslV is capped on each side by a ring-shaped HslU homohexamer. The assembly of the HslU/HslV complex is dependent on binding of ATP.

It is found in the cytoplasm. It catalyses the reaction ATP-dependent cleavage of peptide bonds with broad specificity.. Allosterically activated by HslU binding. In terms of biological role, protease subunit of a proteasome-like degradation complex believed to be a general protein degrading machinery. This Haemophilus influenzae (strain PittGG) protein is ATP-dependent protease subunit HslV.